A 480-amino-acid chain; its full sequence is Glutamyl-tRNA(Gln) amidotransferase subunit A (480 aa).

Residues Lys-76 and Ser-151 each act as charge relay system in the active site. Ser-175 (acyl-ester intermediate) is an active-site residue.

This sequence belongs to the amidase family. GatA subfamily. In terms of assembly, heterotrimer of A, B and C subunits.

The enzyme catalyses L-glutamyl-tRNA(Gln) + L-glutamine + ATP + H2O = L-glutaminyl-tRNA(Gln) + L-glutamate + ADP + phosphate + H(+). In terms of biological role, allows the formation of correctly charged Gln-tRNA(Gln) through the transamidation of misacylated Glu-tRNA(Gln) in organisms which lack glutaminyl-tRNA synthetase. The reaction takes place in the presence of glutamine and ATP through an activated gamma-phospho-Glu-tRNA(Gln). This is Glutamyl-tRNA(Gln) amidotransferase subunit A from Exiguobacterium sibiricum (strain DSM 17290 / CCUG 55495 / CIP 109462 / JCM 13490 / 255-15).